We begin with the raw amino-acid sequence, 141 residues long: Nucleoside diphosphate kinase (141 aa).

Residues Lys-11, Phe-59, Arg-87, Thr-93, Arg-104, and Asn-114 each contribute to the ATP site. The active-site Pros-phosphohistidine intermediate is the His-117.

This sequence belongs to the NDK family. As to quaternary structure, homotetramer. Mg(2+) serves as cofactor.

It is found in the cytoplasm. It carries out the reaction a 2'-deoxyribonucleoside 5'-diphosphate + ATP = a 2'-deoxyribonucleoside 5'-triphosphate + ADP. The enzyme catalyses a ribonucleoside 5'-diphosphate + ATP = a ribonucleoside 5'-triphosphate + ADP. Its function is as follows. Major role in the synthesis of nucleoside triphosphates other than ATP. The ATP gamma phosphate is transferred to the NDP beta phosphate via a ping-pong mechanism, using a phosphorylated active-site intermediate. The chain is Nucleoside diphosphate kinase from Polaromonas sp. (strain JS666 / ATCC BAA-500).